The following is a 1090-amino-acid chain: ATP-dependent helicase/deoxyribonuclease subunit B (1090 aa).

Residue 7 to 14 coordinates ATP; that stretch reads GPVGSGKS. [4Fe-4S] cluster-binding residues include cysteine 719, cysteine 1035, cysteine 1038, and cysteine 1044.

It belongs to the helicase family. AddB/RexB type 1 subfamily. As to quaternary structure, heterodimer of AddA and AddB. It depends on Mg(2+) as a cofactor. The cofactor is [4Fe-4S] cluster.

The heterodimer acts as both an ATP-dependent DNA helicase and an ATP-dependent, dual-direction single-stranded exonuclease. Recognizes the chi site generating a DNA molecule suitable for the initiation of homologous recombination. The AddB subunit has 5' -&gt; 3' nuclease activity but not helicase activity. This Carboxydothermus hydrogenoformans (strain ATCC BAA-161 / DSM 6008 / Z-2901) protein is ATP-dependent helicase/deoxyribonuclease subunit B.